The sequence spans 321 residues: Carbonic anhydrase, chloroplastic (321 aa).

A chloroplast-targeting transit peptide spans 1 to 100 (MSTASINSCL…AAARVDQITA (100 aa)).

This sequence belongs to the beta-class carbonic anhydrase family. Homohexamer.

The protein localises to the plastid. It localises to the chloroplast stroma. The catalysed reaction is hydrogencarbonate + H(+) = CO2 + H2O. Reversible hydration of carbon dioxide. This chain is Carbonic anhydrase, chloroplastic, found in Nicotiana tabacum (Common tobacco).